Here is a 194-residue protein sequence, read N- to C-terminus: Imidazoleglycerol-phosphate dehydratase (194 aa).

It belongs to the imidazoleglycerol-phosphate dehydratase family.

The protein resides in the cytoplasm. The catalysed reaction is D-erythro-1-(imidazol-4-yl)glycerol 3-phosphate = 3-(imidazol-4-yl)-2-oxopropyl phosphate + H2O. The protein operates within amino-acid biosynthesis; L-histidine biosynthesis; L-histidine from 5-phospho-alpha-D-ribose 1-diphosphate: step 6/9. The polypeptide is Imidazoleglycerol-phosphate dehydratase (Bacillus cereus (strain ATCC 14579 / DSM 31 / CCUG 7414 / JCM 2152 / NBRC 15305 / NCIMB 9373 / NCTC 2599 / NRRL B-3711)).